A 243-amino-acid chain; its full sequence is Uridylate kinase (243 aa).

18–21 (KLGG) lines the ATP pocket. Position 59 (G59) interacts with UMP. ATP is bound by residues G60 and R64. Residues D79 and 140–147 (MGMPYFST) contribute to the UMP site. Residues Y173 and D176 each contribute to the ATP site.

The protein belongs to the UMP kinase family. Homohexamer.

Its subcellular location is the cytoplasm. It carries out the reaction UMP + ATP = UDP + ADP. The protein operates within pyrimidine metabolism; CTP biosynthesis via de novo pathway; UDP from UMP (UMPK route): step 1/1. Inhibited by UTP. Its function is as follows. Catalyzes the reversible phosphorylation of UMP to UDP. The sequence is that of Uridylate kinase from Corynebacterium glutamicum (strain R).